Consider the following 360-residue polypeptide: Probable mannan endo-1,4-beta-mannosidase A (360 aa).

The first 18 residues, 1 to 18 (MKLSQILTFASLLSGALA), serve as a signal peptide directing secretion. The substrate site is built by Asn-142 and Asn-178. Catalysis depends on Glu-179, which acts as the Proton donor. A substrate-binding site is contributed by Tyr-254. The active-site Nucleophile is Glu-287. Asn-307 carries an N-linked (GlcNAc...) asparagine glycan. Trp-317 serves as a coordination point for substrate.

It belongs to the glycosyl hydrolase 5 (cellulase A) family.

It is found in the secreted. It carries out the reaction Random hydrolysis of (1-&gt;4)-beta-D-mannosidic linkages in mannans, galactomannans and glucomannans.. In terms of biological role, endo-1,4-mannanase, a crucial enzyme for depolymerization of seed galactomannans and wood galactoglucomannans. This is Probable mannan endo-1,4-beta-mannosidase A (manA) from Aspergillus clavatus (strain ATCC 1007 / CBS 513.65 / DSM 816 / NCTC 3887 / NRRL 1 / QM 1276 / 107).